The chain runs to 200 residues: dITP/XTP pyrophosphatase (200 aa).

7–12 (TSNKHK) is a binding site for substrate. The Mg(2+) site is built by E38 and D73. D73 (proton acceptor) is an active-site residue. Residues S74, 154 to 157 (FGYD), K177, and 182 to 183 (HR) each bind substrate.

This sequence belongs to the HAM1 NTPase family. As to quaternary structure, homodimer. Mg(2+) is required as a cofactor.

It carries out the reaction XTP + H2O = XMP + diphosphate + H(+). The catalysed reaction is dITP + H2O = dIMP + diphosphate + H(+). It catalyses the reaction ITP + H2O = IMP + diphosphate + H(+). In terms of biological role, pyrophosphatase that catalyzes the hydrolysis of nucleoside triphosphates to their monophosphate derivatives, with a high preference for the non-canonical purine nucleotides XTP (xanthosine triphosphate), dITP (deoxyinosine triphosphate) and ITP. Seems to function as a house-cleaning enzyme that removes non-canonical purine nucleotides from the nucleotide pool, thus preventing their incorporation into DNA/RNA and avoiding chromosomal lesions. The protein is dITP/XTP pyrophosphatase of Campylobacter jejuni subsp. jejuni serotype O:2 (strain ATCC 700819 / NCTC 11168).